A 995-amino-acid polypeptide reads, in one-letter code: Zinc finger protein ZFPM1 (995 aa).

The segment covering 1 to 14 has biased composition (basic residues); the sequence is MSRRKQSNPRQIKR. The interval 1 to 103 is disordered; that stretch reads MSRRKQSNPR…EAAMASPWSG (103 aa). The segment covering 15–36 has biased composition (basic and acidic residues); that stretch reads SLRDMEAGEEAKAMDSSPKEQE. Composition is skewed to acidic residues over residues 67 to 78 and 86 to 95; these read SPEDPEDMEGQE and EEKEEKEEEA. Residues Ser-99 and Ser-143 each carry the phosphoserine modification. The segment at 249 to 282 adopts a CCHC FOG-type 1 zinc-finger fold; that stretch reads VINKDVFPCKDCGIWYRSERNLQAHLLYYCASRQ. Zn(2+)-binding residues include Cys-257, Cys-260, His-273, and Cys-278. Ser-286 bears the Phosphoserine mark. 3 C2H2-type zinc fingers span residues 303–327, 333–355, and 361–384; these read RVCP…MRSH, FVCL…LKVH, and GVCH…VTNH. The interaction with TACC3 stretch occupies residues 343-354; sequence TTKANCERHLKV. Phosphoserine is present on residues Ser-397, Ser-497, and Ser-500. The interval 424–526 is disordered; that stretch reads PLVPADKAPT…SSPGPGELTM (103 aa). Positions 509 to 525 are enriched in low complexity; that stretch reads ELSSPTPGSSPGPGELT. The segment at 584-617 adopts a CCHC FOG-type 2 zinc-finger fold; that stretch reads FSGTKGATCFECEITFNNINNFYVHKRLYCSGRR. Zn(2+) is bound by residues Cys-592, Cys-595, His-608, and Cys-613. Positions 616-694 are disordered; that stretch reads RRAPEDPPTV…SVDDAEDDPS (79 aa). Positions 630 to 652 are enriched in low complexity; it reads AATGPARAPAGAAAEPDPSRSSP. Residues Ser-651 and Ser-684 each carry the phosphoserine modification. The CCHC FOG-type 3 zinc finger occupies 690-723; that stretch reads EDDPSRTLCEACNIRFSRHETYTVHKRYYCASRH. Residues Cys-698, Cys-701, His-714, and Cys-719 each coordinate Zn(2+). The tract at residues 721–827 is disordered; that stretch reads SRHDPPPRRP…PRRQSPDAPT (107 aa). Pro residues-rich tracts occupy residues 728–740 and 764–779; these read RRPP…PGPA and GAPP…PVVP. Over residues 785–800 the composition is skewed to low complexity; it reads LPSSPRPGSASAGPAP. Phosphoserine is present on Ser-803. The interval 811–817 is interaction with CTBP2; the sequence is PIDLSKR. Ser-822 bears the Phosphoserine mark. Residues 830-863 form a CCHC FOG-type 4 zinc finger; the sequence is PALADYHECTACRVSFHSLEAYLAHKKYSCPAAP. The Zn(2+) site is built by Cys-838, Cys-841, His-854, and Cys-859. The segment at 868–891 adopts a C2H2-type 4 zinc-finger fold; it reads ALCPYCPPNGRVRGDLVEHLRQAH. Residues 892–960 form a disordered region; it reads GLQVAKPAAS…APAPAPGGGG (69 aa). Basic and acidic residues predominate over residues 908–922; that stretch reads TPAERAPRDSPDGRA. Residues Ser-925 and Ser-927 each carry the phosphoserine modification. The CCHC FOG-type 5 zinc-finger motif lies at 957–990; that stretch reads GGGGGHRYCRLCNIRFSSLSTFIAHKKYYCSSHA. 4 residues coordinate Zn(2+): Cys-965, Cys-968, His-981, and Cys-986.

This sequence belongs to the FOG (Friend of GATA) family. As to quaternary structure, interacts with the N-terminal zinc-finger of GATA1, GATA2 and GATA3. Interacts with corepressor CTBP2; this interaction is however not essential for corepressor activity in erythropoiesis. Interacts with TACC3. In terms of tissue distribution, mainly expressed in hematopoietic tissues. Expressed in the spleen, a primary site of hematopoiesis in the adult mouse, as well as in the liver and testis, but not in the heart, brain, lung, kidney, or skeletal muscle. Among hematopoietic cell lines, it is strongly expressed in erythroid and megakaryocytic cell lines. Expressed at low level in several lymphoid and early myeloid cell lines. Not expressed in mast cell and macrophage lines. Expressed in the heart, where it colocalizes with GATA4, GATA5 and GATA6.

It localises to the nucleus. Transcription regulator that plays an essential role in erythroid and megakaryocytic cell differentiation. Essential cofactor that acts via the formation of a heterodimer with transcription factors of the GATA family GATA1, GATA2 and GATA3. Such heterodimer can both activate or repress transcriptional activity, depending on the cell and promoter context. The heterodimer formed with GATA proteins is essential to activate expression of genes such as NFE2, ITGA2B, alpha- and beta-globin, while it represses expression of KLF1. May be involved in regulation of some genes in gonads. May also be involved in cardiac development, in a non-redundant way with ZFPM2/FOG2. This chain is Zinc finger protein ZFPM1 (Zfpm1), found in Mus musculus (Mouse).